We begin with the raw amino-acid sequence, 518 residues long: Putative N-acetylmuramoyl-L-alanine amidase YrvJ (518 aa).

A signal peptide spans 1–27; that stretch reads MNKKYFVLIVCIIFTSALFPTFSSVTA. SH3b domains follow at residues 29 to 91, 102 to 164, 181 to 243, and 258 to 320; these read QGEA…ITKE, SDTV…TSGG, STTG…LTSS, and AKKA…VQTS. Disordered regions lie at residues 94-121 and 160-186; these read ASTS…PGTS and VTSG…TGTV. 2 stretches are compositionally biased toward low complexity: residues 95 to 108 and 160 to 169; these read STSS…VTST and VTSGGSSSAS. The tract at residues 322 to 352 is disordered; the sequence is SAEEAGEPPVSDSPSGNGSLNNKTIIVDPGH. The span at 333 to 345 shows a compositional bias: polar residues; that stretch reads DSPSGNGSLNNKT. A MurNAc-LAA domain is found at 346–514; that stretch reads IIVDPGHGGK…VTDGIESGLE (169 aa).

This sequence belongs to the N-acetylmuramoyl-L-alanine amidase 3 family.

It is found in the secreted. The protein localises to the cell wall. It carries out the reaction Hydrolyzes the link between N-acetylmuramoyl residues and L-amino acid residues in certain cell-wall glycopeptides.. In terms of biological role, probably involved in cell-wall metabolism. The polypeptide is Putative N-acetylmuramoyl-L-alanine amidase YrvJ (yrvJ) (Bacillus subtilis (strain 168)).